The primary structure comprises 321 residues: NADPH-dependent codeinone reductase 1-1 (321 aa).

NADPH-binding residues include T27 and D51. Active-site proton donor residues include Y56 and H119. H119 contacts substrate. 5 residues coordinate NADPH: Q187, S214, L216, S264, and R269.

This sequence belongs to the aldo/keto reductase family. Latex secreting cells (laticifer cells). Expressed constitutively and ubiquitously with highest levels in capsules. Restricted to the parietal region of sieve elements adjacent or proximal to laticifers in roots, stems, leaves and carpels.

Its subcellular location is the cytoplasm. The protein resides in the cytosol. The catalysed reaction is codeine + NADP(+) = codeinone + NADPH + H(+). The enzyme catalyses neopine + NADP(+) = neopinone + NADPH + H(+). It catalyses the reaction morphine + NADP(+) = morphinone + NADPH + H(+). It carries out the reaction neomorphine + NADP(+) = neomorphinone + NADPH + H(+). It participates in alkaloid biosynthesis; morphine biosynthesis. Functionally, NADPH-dependent reductase involved in biosynthesis of morphinan-type benzylisoquinoline and opiate alkaloids natural products. Reduces codeinone to codeine in the penultimate step in morphine biosynthesis. Can use morphinone, hydrocodone and hydromorphone as substrate during reductive reaction with NADPH as cofactor, and morphine and dihydrocodeine as substrate during oxidative reaction with NADP as cofactor. Converts morphinone to morphine, and neomorphinone to neomorphine. Reduces irreversibly neopinone, a spontaneous isomer of codeinone, to neopine; in planta, neopine levels are limited to low levels. The chain is NADPH-dependent codeinone reductase 1-1 from Papaver somniferum (Opium poppy).